A 308-amino-acid polypeptide reads, in one-letter code: Mitochondrial import receptor subunit TOM40B (308 aa).

Positions 1–29 (MGNTLGLAPMGTLPRRSPRREEPLPNPGS) are disordered. The segment at 281-308 (PLPVTLALGAFLNHWRNRFHCGFSITVG) is required for mitochondrial targeting.

This sequence belongs to the Tom40 family. In terms of assembly, forms part of the preprotein translocase of the outer mitochondrial membrane (TOM complex) containing TOMM22, TOMM40, TOMM40L and TOMM70. Interacts with mitochondrial targeting sequences.

The protein localises to the mitochondrion outer membrane. Functionally, potential channel-forming protein implicated in import of protein precursors into mitochondria. The sequence is that of Mitochondrial import receptor subunit TOM40B (TOMM40L) from Homo sapiens (Human).